Consider the following 121-residue polypeptide: Large-conductance mechanosensitive channel (121 aa).

2 consecutive transmembrane segments (helical) span residues 14–34 (VLDL…VKSL) and 67–87 (GAFL…FVLI).

It belongs to the MscL family. Homopentamer.

It is found in the cell membrane. Functionally, channel that opens in response to stretch forces in the membrane lipid bilayer. May participate in the regulation of osmotic pressure changes within the cell. The sequence is that of Large-conductance mechanosensitive channel from Lactococcus lactis subsp. cremoris (strain SK11).